A 563-amino-acid polypeptide reads, in one-letter code: DNA repair protein rhp7 (563 aa).

Positions 1-101 are disordered; sequence MSSGSRVRGP…TDEEAEDNED (101 aa). The span at 39–59 shows a compositional bias: polar residues; it reads ESAGQSTGTESEVIQTPTSVE. Over residues 78–90 the composition is skewed to basic residues; the sequence is VKRRNLRNQKKKK.

The protein belongs to the RAD7 family.

It is found in the nucleus. Involved in global genome repair (GGR) via nucleotide excision repair (NER), in conjunction with rhp16, after UV irradiation. This is DNA repair protein rhp7 (rhp7) from Schizosaccharomyces pombe (strain 972 / ATCC 24843) (Fission yeast).